The following is a 527-amino-acid chain: MFGADGRPAIGTAAGKSWHFSRTMEELVHDLVSALEESSEQARGGFAETGEHSRNLSCPLKRQARKRRGRKRRSYNVHHPWETGHCLSEGSDSSLEEPSKDYREKHSNNKKDRSDSDDQMLVAKRRPSSNLSSSVRGKRLLWHESDFAVDSLGNRTLRRRRKVKRMAVDLPQDVSSKRTMTQLPEGCRDQDMDNDRASQYPEFTRKKVKKRKLKGIRPGPKTQEEGGVLESEERSQPNKDRMEYEEQKASDELRSESDTSSLSSTDAGLFTNDEGRQGDDEQSDWFYEKESGGACGIAGVVPWWEKDEPAELDTNLPDPVFESILSGSFPLMSHPGRGGFQARLSRLHGTPSKNIKKSSGAPPSMLSAPGPGSNKRMVHFSPDAHRHDHWFSPGARTEHGQHQLLRDNRAERGHKKSCSLKTASRQTSMHLGSLCTGDIKRRRKAAPLPGPTAAGIVGENAQPILESNIGNRMLQSMGWTPGSGLGRDGRGIAEPVQAVQRPKGLGLGFPLPKSSPTSPAPTSGNPA.

A disordered region spans residues Leu-35–Val-135. Basic residues predominate over residues Arg-62–Asn-76. Residues Glu-97 to Ser-116 are compositionally biased toward basic and acidic residues. Phosphoserine is present on residues Ser-114, Ser-116, and Ser-145. Disordered regions lie at residues Ser-175–Glu-281, Thr-350–Lys-375, and Thr-480–Ala-527. Over residues Gly-186–Arg-196 the composition is skewed to basic and acidic residues. Basic residues predominate over residues Lys-206 to Gly-215. Positions Ser-231–Ser-257 are enriched in basic and acidic residues. Residues Glu-466 to Pro-512 form the G-patch domain. Over residues Pro-510 to Ala-527 the composition is skewed to low complexity.

Interacts with DHX15.

The protein localises to the nucleus speckle. It is found in the nucleus. It localises to the nucleolus. In terms of biological role, enhances the ATPase activity of DHX15 in vitro. The protein is G patch domain-containing protein 2 (Gpatch2) of Mus musculus (Mouse).